The following is a 362-amino-acid chain: Photosystem II protein D1 3 (362 aa).

The next 3 membrane-spanning stretches (helical) occupy residues 29–46, 118–133, and 142–156; these read YVGW…SATI, HFLI…EWEL, and WICI…AATA. H118 lines the chlorophyll a pocket. Position 126 (Y126) interacts with pheophytin a. [CaMn4O5] cluster is bound by residues D170 and E189. The chain crosses the membrane as a helical span at residues 197–218; that stretch reads FHMLGVAGVFGGALISAMHGSL. Residue H198 coordinates chlorophyll a. Residues H215 and 264–265 contribute to the a quinone site; that span reads AF. Fe cation is bound at residue H215. Residue H274 participates in Fe cation binding. The helical transmembrane segment at 276-290 threads the bilayer; sequence IMAAFPVIGIWFTSL. Residues H334, E335, D344, and A346 each contribute to the [CaMn4O5] cluster site. A propeptide spanning residues 347-362 is cleaved from the precursor; the sequence is GTESAPVAVSTAKVGG.

The protein belongs to the reaction center PufL/M/PsbA/D family. In terms of assembly, PSII is composed of 1 copy each of membrane proteins PsbA, PsbB, PsbC, PsbD, PsbE, PsbF, PsbH, PsbI, PsbJ, PsbK, PsbL, PsbM, PsbT, PsbX, Psb30/Ycf12, peripheral proteins PsbO, CyanoQ (PsbQ), PsbU, PsbV and a large number of cofactors. It forms dimeric complexes. Requires The D1/D2 heterodimer binds P680, chlorophylls that are the primary electron donor of PSII, and subsequent electron acceptors. It shares a non-heme iron and each subunit binds pheophytin, quinone, additional chlorophylls, carotenoids and lipids. D1 provides most of the ligands for the Mn4-Ca-O5 cluster of the oxygen-evolving complex (OEC). There is also a Cl(-1) ion associated with D1 and D2, which is required for oxygen evolution. The PSII complex binds additional chlorophylls, carotenoids and specific lipids. as cofactor. Post-translationally, tyr-161 forms a radical intermediate that is referred to as redox-active TyrZ, YZ or Y-Z. In terms of processing, C-terminally processed by CtpA; processing is essential to allow assembly of the oxygen-evolving complex and thus photosynthetic growth.

The protein localises to the cell inner membrane. The catalysed reaction is 2 a plastoquinone + 4 hnu + 2 H2O = 2 a plastoquinol + O2. In terms of biological role, photosystem II (PSII) is a light-driven water:plastoquinone oxidoreductase that uses light energy to abstract electrons from H(2)O, generating O(2) and a proton gradient subsequently used for ATP formation. It consists of a core antenna complex that captures photons, and an electron transfer chain that converts photonic excitation into a charge separation. The D1/D2 (PsbA/PsbD) reaction center heterodimer binds P680, the primary electron donor of PSII as well as several subsequent electron acceptors. This chain is Photosystem II protein D1 3, found in Gloeobacter violaceus (strain ATCC 29082 / PCC 7421).